Consider the following 1482-residue polypeptide: Cystic fibrosis transmembrane conductance regulator (1482 aa).

Residues 1–77 (MQRSPLEKAN…KLINALRRCF (77 aa)) lie on the Cytoplasmic side of the membrane. A helical membrane pass occupies residues 78–98 (FWRFVFHGIILYLGEVTKAVQ). The ABC transmembrane type-1 1 domain maps to 81-365 (FVFHGIILYL…WAVQTWYDSL (285 aa)). Over 99-122 (PLLLGRIIASYDPDNKVERSIAIY) the chain is Extracellular. Residues 123–146 (LGIGLCLLFIVRTLLLHPAIFGLH) form a helical membrane-spanning segment. The Cytoplasmic portion of the chain corresponds to 147-195 (HMGMQMRIALFSLIYKKTLKLSSRVLDKISTGQLISLLSNNLNKFDEGL). Residues 196 to 216 (ALAHFVWIVPLQVVLLMGLLW) form a helical membrane-spanning segment. Residues 217–222 (DLLQAS) lie on the Extracellular side of the membrane. A helical transmembrane segment spans residues 223 to 243 (AFCGLAFLIVLALFQAWLGQM). Residues 244 to 298 (MMKYRERRAGKINERLVITSEMIDNIQSVKAYCWEEAMEKMIENLRETELKLTRK) are Cytoplasmic-facing. The chain crosses the membrane as a helical span at residues 299–319 (TAYVRYFNSSAFFFSGFFVVF). The Extracellular segment spans residues 320–339 (LAVLPYALIKGIILRKIFTT). The chain crosses the membrane as a helical span at residues 340-358 (ISFCIVLRMAVTRQFPWAV). Topologically, residues 359–859 (QTWYDSLGAI…YLRYITIHKN (501 aa)) are cytoplasmic. ATP-binding positions include tryptophan 401, serine 434, 458 to 465 (GSTGAGKT), and glutamine 493. Residues 423-646 (NGDNGLFFSN…RPDFSSKLMG (224 aa)) enclose the ABC transporter 1 domain. Cysteine 524 carries the S-palmitoyl cysteine lipid modification. 2 positions are modified to phosphoserine: serine 549 and serine 660. The segment at 654 to 832 (SAERRSSILT…DEINEEDLKE (179 aa)) is disordered R region. Residue serine 670 is modified to Phosphoserine; by PKA. The residue at position 686 (serine 686) is a Phosphoserine. Residue lysine 688 forms a Glycyl lysine isopeptide (Lys-Gly) (interchain with G-Cter in ubiquitin) linkage. Residues serine 700, serine 712, serine 737, serine 769, serine 796, and serine 814 each carry the phosphoserine modification. The helical transmembrane segment at 860–880 (LVFVLIWCLVIFLVEVAASLV) threads the bilayer. In terms of domain architecture, ABC transmembrane type-1 2 spans 860–1156 (LVFVLIWCLV…AVNSSIDVDS (297 aa)). Residues 881–919 (GLWLLEDISFKDKTNGTNGANNTFPVIITDTSKYYLFYI) lie on the Extracellular side of the membrane. N-linked (GlcNAc...) asparagine glycosylation is found at asparagine 895 and asparagine 901. A discontinuously helical transmembrane segment spans residues 920-940 (YVGIADTFFALGIFRGLPLVH). The Cytoplasmic segment spans residues 941–991 (TLISVSKILHHKMLYSVLKAPMSTFNTLKPGGILNRFSKDIAILDDLLPLT). Residues 992–1012 (IFDFIQLILIVVGALIVVSAI) form a helical membrane-spanning segment. The Extracellular portion of the chain corresponds to 1013–1014 (RP). The helical transmembrane segment at 1015-1035 (YIFLATVPVIIAFIMLRAYFL) threads the bilayer. At 1036–1096 (QTSQQLKQLE…TASWFLYLST (61 aa)) the chain is on the cytoplasmic side. Residues 1097–1117 (LRWFQMRIELVFVIFFIAVTF) form a helical membrane-spanning segment. Over 1118-1131 (ISILTTGDGEGRVG) the chain is Extracellular. Residues 1132–1152 (ILLTLAMNIMSTLQWAVNSSI) traverse the membrane as a helical segment. The Cytoplasmic portion of the chain corresponds to 1153 to 1482 (DVDSLMRSVS…TEEEVQETRL (330 aa)). Residues 1212–1445 (MIVKDLTAKY…KSLYRQAISH (234 aa)) enclose the ABC transporter 2 domain. Residues tyrosine 1221 and 1246 to 1253 (GRTGSGKS) each bind ATP. Residues 1388-1482 (RVLKNAFANC…TEEEVQETRL (95 aa)) are interaction with GORASP2. Cysteine 1397 is lipidated: S-palmitoyl cysteine. Phosphoserine is present on residues serine 1446 and serine 1458. Positions 1480–1482 (TRL) match the PDZ-binding motif.

Belongs to the ABC transporter superfamily. ABCC family. CFTR transporter (TC 3.A.1.202) subfamily. In terms of assembly, monomer; does not require oligomerization for channel activity. May form oligomers in the membrane. Interacts with SLC26A3, SLC26A6 and NHERF1. Interacts with SHANK2. Interacts with MYO6. Interacts (via C-terminus) with GOPC (via PDZ domain); this promotes CFTR internalization and thereby decreases channel activity. Interacts with SLC4A7 through NHERF1. Found in a complex with MYO5B and RAB11A. Interacts with ANO1. Interacts with SLC26A8. Interacts with AHCYL1; the interaction increases CFTR activity. Interacts with CSE1L. The core-glycosylated form interacts with GORASP2 (via PDZ GRASP-type 1 domain) in respone to ER stress. Interacts with MARCHF2; the interaction leads to CFTR ubiqtuitination and degradation. Interacts with ADGRG2. Post-translationally, N-glycosylated. In terms of processing, phosphorylated; cAMP treatment promotes phosphorylation and activates the channel. Dephosphorylation decreases the ATPase activity (in vitro). Phosphorylation at PKA sites activates the channel. Phosphorylation at PKC sites enhances the response to phosphorylation by PKA. Phosphorylated by AMPK; this inhibits channel activity. Ubiquitinated, leading to its degradation in the lysosome. Deubiquitination by USP10 in early endosomes enhances its endocytic recycling to the cell membrane. Ubiquitinated by RNF185 during ER stress. Ubiquitinated by MARCHF2.

Its subcellular location is the apical cell membrane. It is found in the early endosome membrane. It localises to the cell membrane. The protein resides in the recycling endosome membrane. The protein localises to the endoplasmic reticulum membrane. Its subcellular location is the nucleus. The catalysed reaction is ATP + H2O + closed Cl(-) channel = ADP + phosphate + open Cl(-) channel.. The enzyme catalyses chloride(in) = chloride(out). It carries out the reaction hydrogencarbonate(in) = hydrogencarbonate(out). It catalyses the reaction ATP + H2O = ADP + phosphate + H(+). Functionally, epithelial ion channel that plays an important role in the regulation of epithelial ion and water transport and fluid homeostasis. Mediates the transport of chloride ions across the cell membrane. Possesses an intrinsic ATPase activity and utilizes ATP to gate its channel; the passive flow of anions through the channel is gated by cycles of ATP binding and hydrolysis by the ATP-binding domains. The ion channel is also permeable to HCO(3)(-); selectivity depends on the extracellular chloride concentration. Exerts its function also by modulating the activity of other ion channels and transporters. Contributes to the regulation of the pH and the ion content of the epithelial fluid layer. Modulates the activity of the epithelial sodium channel (ENaC) complex, in part by regulating the cell surface expression of the ENaC complex. May regulate bicarbonate secretion and salvage in epithelial cells by regulating the transporter SLC4A7. Can inhibit the chloride channel activity of ANO1. Plays a role in the chloride and bicarbonate homeostasis during sperm epididymal maturation and capacitation. The protein is Cystic fibrosis transmembrane conductance regulator of Didelphis virginiana (North American opossum).